Consider the following 174-residue polypeptide: Cytochrome c-type biogenesis protein CcmE (174 aa).

Topologically, residues 1–8 (MNPRRKSR) are cytoplasmic. A helical; Signal-anchor for type II membrane protein membrane pass occupies residues 9–29 (LSVVLFILLGISVASALVLYA). The Periplasmic segment spans residues 30 to 174 (LRQNIDLFYT…QEKQFKEGNQ (145 aa)). 2 residues coordinate heme: His-131 and Tyr-135. Positions 149–174 (KPMGISDLKNESDRDRQEKQFKEGNQ) are disordered. Residues 156–174 (LKNESDRDRQEKQFKEGNQ) show a composition bias toward basic and acidic residues.

Belongs to the CcmE/CycJ family.

It localises to the cell inner membrane. Its function is as follows. Heme chaperone required for the biogenesis of c-type cytochromes. Transiently binds heme delivered by CcmC and transfers the heme to apo-cytochromes in a process facilitated by CcmF and CcmH. The chain is Cytochrome c-type biogenesis protein CcmE from Histophilus somni (strain 2336) (Haemophilus somnus).